Reading from the N-terminus, the 527-residue chain is Ribosomal protein S6 kinase beta-1 (527 aa).

The tract at residues 1 to 54 is disordered; that stretch reads MRRRRRRDGFYPAPDFRDREAEDMAGVFDIDLDQPEDAGSEDELEEGGQLNESM. Residues 28–32 carry the TOS motif motif; it reads FDIDL. Acidic residues predominate over residues 30-46; that stretch reads IDLDQPEDAGSEDELEE. Residues 91-352 enclose the Protein kinase domain; that stretch reads FELLRVLGKG…AGEVQAHPFF (262 aa). Residues 97 to 105 and lysine 123 each bind ATP; that span reads LGKGGYGKV. Aspartate 218 functions as the Proton acceptor in the catalytic mechanism. Residue threonine 252 is modified to Phosphothreonine; by PDPK1. An AGC-kinase C-terminal domain is found at 353–423; that stretch reads RHINWEELLA…VAPSVLESVK (71 aa). Serine 394 is subject to Phosphoserine. Threonine 412 is subject to Phosphothreonine; by MTOR, NEK6 and NEK7. The segment at 424–527 is autoinhibitory domain; sequence EKFSFEPKIR…PEHLRMNLEL (104 aa). A phosphoserine mark is found at serine 434 and serine 441. Phosphothreonine is present on threonine 444. Phosphoserine is present on residues serine 447 and serine 452. Lysine 516 is subject to N6-acetyllysine.

The protein belongs to the protein kinase superfamily. AGC Ser/Thr protein kinase family. S6 kinase subfamily. As to quaternary structure, interacts with PPP1R9A/neurabin-1. Interacts with RPTOR. Interacts with IRS1. Interacts with EIF3B and EIF3C. Interacts with TRAF4. Interacts with POLDIP3. Interacts (via N-terminus) with IER5. Post-translationally, phosphorylation at Thr-412 is regulated by mTORC1. The phosphorylation at this site is maintained by an agonist-dependent autophosphorylation mechanism. Activated by phosphorylation at Thr-252 by PDPK1. Dephosphorylation by PPP1CC at Thr-412 in mitochondrion.

It localises to the cytoplasm. The protein resides in the synapse. The protein localises to the synaptosome. It is found in the mitochondrion outer membrane. Its subcellular location is the mitochondrion. The catalysed reaction is L-seryl-[protein] + ATP = O-phospho-L-seryl-[protein] + ADP + H(+). It catalyses the reaction L-threonyl-[protein] + ATP = O-phospho-L-threonyl-[protein] + ADP + H(+). Its activity is regulated as follows. Inactivated by binding to URI1. Activation requires multiple phosphorylation events on serine/threonine residues. Activation appears to be first mediated by phosphorylation of multiple sites in the autoinhibitory domain, which facilitates phosphorylation at Thr-412, disrupting the autoinhibitory mechanism and allowing phosphorylation of Thr-252 by PDPK1. The active conformation of the kinase is believed to be stabilized by a mechanism involving three conserved phosphorylation sites located in the kinase domain activation loop (Thr-252) and in the AGC-kinase C-terminal domain (Ser-394 in the middle of the tail/linker region and Thr-412 within a hydrophobic motif at its end). Activated by mTORC1; isoform Alpha I and isoform Alpha II are sensitive to rapamycin, which inhibits activating phosphorylation at Thr-412. Activated by PDPK1. Functionally, serine/threonine-protein kinase that acts downstream of mTOR signaling in response to growth factors and nutrients to promote cell proliferation, cell growth and cell cycle progression. Regulates protein synthesis through phosphorylation of EIF4B, RPS6 and EEF2K, and contributes to cell survival by repressing the pro-apoptotic function of BAD. Under conditions of nutrient depletion, the inactive form associates with the EIF3 translation initiation complex. Upon mitogenic stimulation, phosphorylation by the mechanistic target of rapamycin complex 1 (mTORC1) leads to dissociation from the EIF3 complex and activation. The active form then phosphorylates and activates several substrates in the pre-initiation complex, including the EIF2B complex and the cap-binding complex component EIF4B. Also controls translation initiation by phosphorylating a negative regulator of EIF4A, PDCD4, targeting it for ubiquitination and subsequent proteolysis. Promotes initiation of the pioneer round of protein synthesis by phosphorylating POLDIP3/SKAR. In response to IGF1, activates translation elongation by phosphorylating EEF2 kinase (EEF2K), which leads to its inhibition and thus activation of EEF2. Also plays a role in feedback regulation of mTORC2 by mTORC1 by phosphorylating MAPKAP1/SIN1, MTOR and RICTOR, resulting in the inhibition of mTORC2 and AKT1 signaling. Also involved in feedback regulation of mTORC1 and mTORC2 by phosphorylating DEPTOR. Mediates cell survival by phosphorylating the pro-apoptotic protein BAD and suppressing its pro-apoptotic function. Phosphorylates mitochondrial URI1 leading to dissociation of a URI1-PPP1CC complex. The free mitochondrial PPP1CC can then dephosphorylate RPS6KB1 at Thr-412, which is proposed to be a negative feedback mechanism for the RPS6KB1 anti-apoptotic function. Mediates TNF-alpha-induced insulin resistance by phosphorylating IRS1 at multiple serine residues, resulting in accelerated degradation of IRS1. In cells lacking functional TSC1-2 complex, constitutively phosphorylates and inhibits GSK3B. May be involved in cytoskeletal rearrangement through binding to neurabin. Phosphorylates and activates the pyrimidine biosynthesis enzyme CAD, downstream of MTOR. Following activation by mTORC1, phosphorylates EPRS and thereby plays a key role in fatty acid uptake by adipocytes and also most probably in interferon-gamma-induced translation inhibition. In Bos taurus (Bovine), this protein is Ribosomal protein S6 kinase beta-1 (RPS6KB1).